A 425-amino-acid chain; its full sequence is Dihydroorotase (425 aa).

Residues His-59 and His-61 each coordinate Zn(2+). Substrate-binding positions include 61–63 and Asn-93; that span reads HLR. Residues Asp-151, His-178, and His-231 each contribute to the Zn(2+) site. Position 277 (Asn-277) interacts with substrate. Asp-304 contacts Zn(2+). Residue Asp-304 is part of the active site. Substrate contacts are provided by residues His-308 and 322-323; that span reads FG.

The protein belongs to the metallo-dependent hydrolases superfamily. DHOase family. Class I DHOase subfamily. Zn(2+) serves as cofactor.

The enzyme catalyses (S)-dihydroorotate + H2O = N-carbamoyl-L-aspartate + H(+). Its pathway is pyrimidine metabolism; UMP biosynthesis via de novo pathway; (S)-dihydroorotate from bicarbonate: step 3/3. In terms of biological role, catalyzes the reversible cyclization of carbamoyl aspartate to dihydroorotate. The sequence is that of Dihydroorotase from Staphylococcus epidermidis (strain ATCC 35984 / DSM 28319 / BCRC 17069 / CCUG 31568 / BM 3577 / RP62A).